A 119-amino-acid polypeptide reads, in one-letter code: Large ribosomal subunit protein uL22 (119 aa).

Belongs to the universal ribosomal protein uL22 family. Part of the 50S ribosomal subunit.

This protein binds specifically to 23S rRNA; its binding is stimulated by other ribosomal proteins, e.g. L4, L17, and L20. It is important during the early stages of 50S assembly. It makes multiple contacts with different domains of the 23S rRNA in the assembled 50S subunit and ribosome. Functionally, the globular domain of the protein is located near the polypeptide exit tunnel on the outside of the subunit, while an extended beta-hairpin is found that lines the wall of the exit tunnel in the center of the 70S ribosome. The sequence is that of Large ribosomal subunit protein uL22 from Rickettsia canadensis (strain McKiel).